The sequence spans 93 residues: UPF0473 protein BH1270 (93 aa).

The protein belongs to the UPF0473 family.

The polypeptide is UPF0473 protein BH1270 (Halalkalibacterium halodurans (strain ATCC BAA-125 / DSM 18197 / FERM 7344 / JCM 9153 / C-125) (Bacillus halodurans)).